The following is a 373-amino-acid chain: Chaperone protein DnaJ (373 aa).

The region spanning 4 to 68 (DFYEILGVSR…QARANYDRFG (65 aa)) is the J domain. The CR-type zinc finger occupies 132-214 (GGEKEIRINH…CGGQGHIQVS (83 aa)). Residues Cys-145, Cys-148, Cys-162, Cys-165, Cys-188, Cys-191, Cys-202, and Cys-205 each coordinate Zn(2+). 4 CXXCXGXG motif repeats span residues 145 to 152 (CKTCQGTG), 162 to 169 (CSTCGGVG), 188 to 195 (CPTCGGSG), and 202 to 209 (CESCGGQG).

Belongs to the DnaJ family. As to quaternary structure, homodimer. Zn(2+) is required as a cofactor.

Its subcellular location is the cytoplasm. Functionally, participates actively in the response to hyperosmotic and heat shock by preventing the aggregation of stress-denatured proteins and by disaggregating proteins, also in an autonomous, DnaK-independent fashion. Unfolded proteins bind initially to DnaJ; upon interaction with the DnaJ-bound protein, DnaK hydrolyzes its bound ATP, resulting in the formation of a stable complex. GrpE releases ADP from DnaK; ATP binding to DnaK triggers the release of the substrate protein, thus completing the reaction cycle. Several rounds of ATP-dependent interactions between DnaJ, DnaK and GrpE are required for fully efficient folding. Also involved, together with DnaK and GrpE, in the DNA replication of plasmids through activation of initiation proteins. This Thermosynechococcus vestitus (strain NIES-2133 / IAM M-273 / BP-1) protein is Chaperone protein DnaJ.